A 228-amino-acid chain; its full sequence is Phosphoribosylformylglycinamidine synthase subunit PurQ (228 aa).

The region spanning 3–225 is the Glutamine amidotransferase type-1 domain; sequence FAVLVFPGSN…LTTLKSGVVT (223 aa). The active-site Nucleophile is the C86. Residues H194 and E196 contribute to the active site.

In terms of assembly, part of the FGAM synthase complex composed of 1 PurL, 1 PurQ and 2 PurS subunits.

The protein resides in the cytoplasm. The enzyme catalyses N(2)-formyl-N(1)-(5-phospho-beta-D-ribosyl)glycinamide + L-glutamine + ATP + H2O = 2-formamido-N(1)-(5-O-phospho-beta-D-ribosyl)acetamidine + L-glutamate + ADP + phosphate + H(+). It catalyses the reaction L-glutamine + H2O = L-glutamate + NH4(+). It participates in purine metabolism; IMP biosynthesis via de novo pathway; 5-amino-1-(5-phospho-D-ribosyl)imidazole from N(2)-formyl-N(1)-(5-phospho-D-ribosyl)glycinamide: step 1/2. Functionally, part of the phosphoribosylformylglycinamidine synthase complex involved in the purines biosynthetic pathway. Catalyzes the ATP-dependent conversion of formylglycinamide ribonucleotide (FGAR) and glutamine to yield formylglycinamidine ribonucleotide (FGAM) and glutamate. The FGAM synthase complex is composed of three subunits. PurQ produces an ammonia molecule by converting glutamine to glutamate. PurL transfers the ammonia molecule to FGAR to form FGAM in an ATP-dependent manner. PurS interacts with PurQ and PurL and is thought to assist in the transfer of the ammonia molecule from PurQ to PurL. The chain is Phosphoribosylformylglycinamidine synthase subunit PurQ from Latilactobacillus sakei subsp. sakei (strain 23K) (Lactobacillus sakei subsp. sakei).